Here is a 205-residue protein sequence, read N- to C-terminus: Quinone-oxidoreductase QR2 (205 aa).

The Flavodoxin-like domain occupies 5–192 (VYIVYYSTYG…LKQAFHQGMY (188 aa)). Residues 11–15 (STYGH), 112–165 (IFFS…SPYG), and His136 contribute to the FMN site. Tyr13 contacts NAD(+).

The protein belongs to the WrbA family. FMN serves as cofactor.

It catalyses the reaction a quinone + NADH + H(+) = a quinol + NAD(+). It carries out the reaction a quinone + NADPH + H(+) = a quinol + NADP(+). Its activity is regulated as follows. Inhibited by dicumarol. Its function is as follows. NAD(P)H:quinone oxidoreductase reducing quinones by a two-electron transfer mechanism. Can use either NADPH or NADH as electron donor. Can use menadione, 5-hydroxy-1,4-naphthoquinone (juglone) and 2,6-dimethoxy-p-benzoquinone (DMBQ) as substrates. Mitigates the toxicity of exogenous quinones in the rhizosphere. In Triphysaria versicolor (Yellow owl's clover), this protein is Quinone-oxidoreductase QR2.